We begin with the raw amino-acid sequence, 234 residues long: Small ribosomal subunit protein uS3 (234 aa).

In terms of domain architecture, KH type-2 spans 39 to 107 (IRKFLKKELY…EVSINIKEVK (69 aa)).

This sequence belongs to the universal ribosomal protein uS3 family. Part of the 30S ribosomal subunit. Forms a tight complex with proteins S10 and S14.

In terms of biological role, binds the lower part of the 30S subunit head. Binds mRNA in the 70S ribosome, positioning it for translation. This is Small ribosomal subunit protein uS3 from Helicobacter acinonychis (strain Sheeba).